Consider the following 226-residue polypeptide: 6-deoxy-6-sulfo-D-fructose transaldolase (226 aa).

Lys-89 serves as the catalytic Schiff-base intermediate with substrate.

The protein belongs to the transaldolase family.

It carries out the reaction 6-deoxy-6-sulfo-D-fructose + D-glyceraldehyde 3-phosphate = D-fructose 6-phosphate + (2S)-3-sulfolactaldehyde. The catalysed reaction is 6-deoxy-6-sulfo-D-fructose + D-erythrose 4-phosphate = (2S)-3-sulfolactaldehyde + D-sedoheptulose 7-phosphate. In terms of biological role, part of the sulfo-TAL (or sulfo-SFT) pathway, a D-sulfoquinovose degradation pathway that produces sulfolactate (SL). Catalyzes the conversion of 6-deoxy-6-sulfo-D-fructose (SF) and glyceraldehyde 3-phosphate (GAP) into fructose-6-phosphate (F6P) and 3-sulfolactaldehyde (SLA). Can also catalyze the SF-cleavage with erythrose 4-phosphate (E4P) as acceptor, forming 3-sulfolactaldehyde (SLA) and sedoheptulose 7-phosphate (S7P). This chain is 6-deoxy-6-sulfo-D-fructose transaldolase, found in Priestia aryabhattai (Bacillus aryabhattai).